A 319-amino-acid polypeptide reads, in one-letter code: F-box only protein 8 (319 aa).

The F-box domain occupies 68–111; the sequence is FINLEMLPPELSFTILSYLNATDLCLASCVWQDLANDELLWQGL. Positions 146–276 constitute an SEC7 domain; sequence FNANPEEGVS…LILLSIDLTS (131 aa).

In terms of tissue distribution, high expression in brain, heart, kidney, liver, lung, skeletal muscle, testis, and day-7 embryos.

Functionally, may promote guanine-nucleotide exchange on an ARF. Promotes the activation of ARF through replacement of GDP with GTP (Potential). The polypeptide is F-box only protein 8 (Fbxo8) (Mus musculus (Mouse)).